The chain runs to 410 residues: Peptidase T (410 aa).

Position 78 (histidine 78) interacts with Zn(2+). Aspartate 80 is an active-site residue. Aspartate 140 contributes to the Zn(2+) binding site. Glutamate 174 (proton acceptor) is an active-site residue. Residues glutamate 175, aspartate 197, and histidine 379 each contribute to the Zn(2+) site.

The protein belongs to the peptidase M20B family. Zn(2+) is required as a cofactor.

It is found in the cytoplasm. The enzyme catalyses Release of the N-terminal residue from a tripeptide.. Functionally, cleaves the N-terminal amino acid of tripeptides. This chain is Peptidase T, found in Staphylococcus saprophyticus subsp. saprophyticus (strain ATCC 15305 / DSM 20229 / NCIMB 8711 / NCTC 7292 / S-41).